The sequence spans 366 residues: Alanine racemase (366 aa).

Catalysis depends on Lys40, which acts as the Proton acceptor; specific for D-alanine. Lys40 is modified (N6-(pyridoxal phosphate)lysine). Arg136 is a binding site for substrate. Residue Tyr263 is the Proton acceptor; specific for L-alanine of the active site. Position 310 (Met310) interacts with substrate.

This sequence belongs to the alanine racemase family. The cofactor is pyridoxal 5'-phosphate.

The enzyme catalyses L-alanine = D-alanine. It participates in amino-acid biosynthesis; D-alanine biosynthesis; D-alanine from L-alanine: step 1/1. In terms of biological role, catalyzes the interconversion of L-alanine and D-alanine. May also act on other amino acids. This Streptococcus pyogenes serotype M5 (strain Manfredo) protein is Alanine racemase (alr).